Here is a 33-residue protein sequence, read N- to C-terminus: Natriuretic peptide NP2 (33 aa).

Cys-10 and Cys-26 are disulfide-bonded.

As to expression, expressed by the venom gland.

It is found in the secreted. Functionally, snake venom natriuretic peptide that shows an increase in perfusion pressure, urinary flow and glomerular filtration rate. Reduces total and proximal tubular transport of sodium. In the aortic ring assay, causes a relaxant effect in endothelium-intact thoracic aortic rings precontracted with phenylephrine in the presence and absence of isatin, a natriuretic receptor antagonist. The polypeptide is Natriuretic peptide NP2 (Crotalus durissus cascavella (Northeastern Brazilian rattlesnake)).